The following is a 174-amino-acid chain: Bifunctional protein PyrR (174 aa).

A PRPP-binding motif is present at residues 97 to 109; sequence VVIVDDVLYTGRT.

The protein belongs to the purine/pyrimidine phosphoribosyltransferase family. PyrR subfamily. In terms of assembly, homodimer and homohexamer; in equilibrium.

It catalyses the reaction UMP + diphosphate = 5-phospho-alpha-D-ribose 1-diphosphate + uracil. Its function is as follows. Regulates transcriptional attenuation of the pyrimidine nucleotide (pyr) operon by binding in a uridine-dependent manner to specific sites on pyr mRNA. This disrupts an antiterminator hairpin in the RNA and favors formation of a downstream transcription terminator, leading to a reduced expression of downstream genes. Functionally, also displays a weak uracil phosphoribosyltransferase activity which is not physiologically significant. This chain is Bifunctional protein PyrR, found in Macrococcus caseolyticus (strain JCSC5402) (Macrococcoides caseolyticum).